The chain runs to 242 residues: Linker for activation of T-cells family member 1 (242 aa).

The Extracellular portion of the chain corresponds to 1-4; sequence MEAD. The chain crosses the membrane as a helical; Signal-anchor for type III membrane protein span at residues 5-28; it reads ALSPVGLGLLLLPFLVTLLAALCV. Residues C27 and C30 are each lipidated (S-palmitoyl cysteine). At 29-242 the chain is on the cytoplasmic side; that stretch reads RCRELPVSYD…PDYENLQELN (214 aa). T40 carries the phosphothreonine modification. Phosphoserine is present on residues S41, S44, S87, S104, S109, and S112. The interval 78 to 118 is disordered; sequence QPDLLPIPRSPQPLGGSHRMPSSQQNSDDANSVASYENQEP. Polar residues predominate over residues 97–115; it reads MPSSQQNSDDANSVASYEN. The tract at residues 136–139 is interaction with PLCG1; the sequence is YLVV. Residue Y175 is modified to Phosphotyrosine. 2 interaction with GRB2, GRAP2 and PIK3R1 regions span residues 175–178 and 195–198; these read YVNV. The tract at residues 176–242 is disordered; it reads VNVPESEESA…PDYENLQELN (67 aa). A phosphoserine mark is found at S199, S212, and S215. Positions 217–234 are enriched in acidic residues; it reads EVEDEGEEEGVDGEEAPD. The residue at position 235 (Y235) is a Phosphotyrosine.

When phosphorylated, interacts directly with the PIK3R1 subunit of phosphoinositide 3-kinase and the SH2 domains of GRB2, GRAP, GRAP2, PLCG1 and PLCG2. Interacts indirectly with CBL, SOS, VAV, and LCP2. Interacts with SHB and SKAP2. Interacts with FCGR1A. Interacts with CLNK. Interacts with GRB2, PLCG1 and THEMIS upon TCR activation in thymocytes. Interacts with THEMIS2. Post-translationally, phosphorylated on tyrosines by ZAP70 upon TCR activation, or by SYK upon other immunoreceptor activation; which leads to the recruitment of multiple signaling molecules. Is one of the most prominently tyrosine-phosphorylated proteins detected following TCR engagement. May be dephosphorylated by PTPRJ. Phosphorylated by ITK leading to the recruitment of VAV1 to LAT-containing complexes. In terms of processing, palmitoylation of Cys-27 and Cys-30 is required for raft targeting and efficient phosphorylation. Phosphorylated on tyrosines by ZAP70 upon TCR activation, or by SYK upon other immunoreceptor activation; which leads to the recruitment of multiple signaling molecules. Is one of the most prominently tyrosine-phosphorylated proteins detected following TCR engagement. May be dephosphorylated by PTPRJ. Phosphorylated by ITK leading to the recruitment of VAV1 to LAT-containing complexes. Post-translationally, 'Lys-63'-linked ubiquitinated by TRAF6. As to expression, expressed in T-cells and mast cells.

It localises to the cell membrane. Required for TCR (T-cell antigen receptor)- and pre-TCR-mediated signaling, both in mature T-cells and during their development. Involved in FCGR3 (low affinity immunoglobulin gamma Fc region receptor III)-mediated signaling in natural killer cells and FCER1 (high affinity immunoglobulin epsilon receptor)-mediated signaling in mast cells. Couples activation of these receptors and their associated kinases with distal intracellular events such as mobilization of intracellular calcium stores, PKC activation, MAPK activation or cytoskeletal reorganization through the recruitment of PLCG1, GRB2, GRAP2, and other signaling molecules. The protein is Linker for activation of T-cells family member 1 (Lat) of Mus musculus (Mouse).